Here is a 175-residue protein sequence, read N- to C-terminus: ATP-dependent protease subunit HslV (175 aa).

Residue Thr2 is part of the active site. Residues Gly158, Cys161, and Thr164 each coordinate Na(+).

This sequence belongs to the peptidase T1B family. HslV subfamily. In terms of assembly, a double ring-shaped homohexamer of HslV is capped on each side by a ring-shaped HslU homohexamer. The assembly of the HslU/HslV complex is dependent on binding of ATP.

Its subcellular location is the cytoplasm. It carries out the reaction ATP-dependent cleavage of peptide bonds with broad specificity.. With respect to regulation, allosterically activated by HslU binding. Functionally, protease subunit of a proteasome-like degradation complex believed to be a general protein degrading machinery. The sequence is that of ATP-dependent protease subunit HslV from Haemophilus influenzae (strain PittGG).